Reading from the N-terminus, the 632-residue chain is MNIRSNPQQTVPAVTTGPLSSSRKIFASPDAAPDLRVPLREIILSEGAGEPNLPVYDTSGPYTDPSVTIDVNAGLARSRKQWVLERGGVEEYEGRQVKPEDNGNLSTDKAARAFSAYHKPLRGLDGHKITQLEFARAGIITKEMIYVAARENLGRKEQLERAEAALADGESFGAEVPAFITPEFVRSEIARGRAIIPCNINHSELEPMIIGRNFLTKINANIGNSAVTSSVEEEVEKMVWAIRWGADTVMDLSTGRNIHTTREWILRNAPVPIGTVPIYQALEKCNGDPVKLTWELYKDTLIEQCEQGVDYFTIHAGVRLSYIHLTANRVTGIVSRGGSIMAKWCLAHHKESFLYTHFDEICDLMRKYDVSFSLGDGLRPGSIADANDRAQFAELETLGELTKIAWDKGCQVMIEGPGHVPMHKIKINMDKQLRECGEAPFYTLGPLTTDIAPGYDHITSGIGAAMIGWFGCAMLCYVTPKEHLGLPDRNDVKVGVITYKIAAHASDLAKGHPAAQLRDDALSRARFDFRWSDQFNLGLDPDTAKNFHDETLPKEAHKVAHFCSMCGPKFCSMKITQDVRDYAATLNDPNSIGMSLSGTAEDGMKQMSAKFKEMGSSVYLDAEKVKESNRVL.

The segment covering 1-23 (MNIRSNPQQTVPAVTTGPLSSSR) has biased composition (polar residues). Residues 1–26 (MNIRSNPQQTVPAVTTGPLSSSRKIF) are disordered. Substrate is bound by residues Asn-221, Met-250, Tyr-279, His-315, 335–337 (SRG), 376–379 (DGLR), and Glu-415. His-419 contributes to the Zn(2+) binding site. Tyr-442 is a substrate binding site. His-483 is a Zn(2+) binding site. Residues Cys-563, Cys-566, and Cys-571 each coordinate [4Fe-4S] cluster.

The protein belongs to the ThiC family. In terms of assembly, homodimer. It depends on [4Fe-4S] cluster as a cofactor.

It carries out the reaction 5-amino-1-(5-phospho-beta-D-ribosyl)imidazole + S-adenosyl-L-methionine = 4-amino-2-methyl-5-(phosphooxymethyl)pyrimidine + CO + 5'-deoxyadenosine + formate + L-methionine + 3 H(+). The protein operates within cofactor biosynthesis; thiamine diphosphate biosynthesis. Its function is as follows. Catalyzes the synthesis of the hydroxymethylpyrimidine phosphate (HMP-P) moiety of thiamine from aminoimidazole ribotide (AIR) in a radical S-adenosyl-L-methionine (SAM)-dependent reaction. In Bradyrhizobium diazoefficiens (strain JCM 10833 / BCRC 13528 / IAM 13628 / NBRC 14792 / USDA 110), this protein is Phosphomethylpyrimidine synthase.